We begin with the raw amino-acid sequence, 211 residues long: Eukaryotic translation initiation factor 4E (211 aa).

Belongs to the eukaryotic initiation factor 4E family. In terms of assembly, eIF4F is a multi-subunit complex, the composition of which varies with external and internal environmental conditions. It is composed of at least eIF4A, eIF4E and eIF4G. eIF4E is also known to interact with other partners.

Recognizes and binds the 7-methylguanosine-containing mRNA cap during an early step in the initiation of protein synthesis and facilitates ribosome binding by inducing the unwinding of the mRNAs secondary structures. In Eremothecium gossypii (strain ATCC 10895 / CBS 109.51 / FGSC 9923 / NRRL Y-1056) (Yeast), this protein is Eukaryotic translation initiation factor 4E (TIF45).